The following is a 457-amino-acid chain: UPF0328 protein ECU05_0030 (457 aa).

Disordered stretches follow at residues 1 to 112 (MPRP…PTAT) and 157 to 183 (VKSQ…NPRI). Basic and acidic residues predominate over residues 74–94 (HTEGCHTHEANPEPNTKHTET). A compositionally biased stretch (pro residues) spans 102–112 (CPPPHPGPTAT).

The protein belongs to the UPF0328 family.

The protein is UPF0328 protein ECU05_0030 of Encephalitozoon cuniculi (strain GB-M1) (Microsporidian parasite).